A 458-amino-acid polypeptide reads, in one-letter code: BUD13 homolog (458 aa).

Disordered stretches follow at residues 16-37 (SGDI…SGLR), 81-328 (KQTF…TEEL), and 437-458 (AKTE…AEYE). Residues 138–148 (NRHDSDKDNSP) are compositionally biased toward basic and acidic residues. 2 stretches are compositionally biased toward basic residues: residues 175–185 (RNRRSPPRTRR) and 208–218 (PRRRPSSPARR). 3 stretches are compositionally biased toward basic and acidic residues: residues 219–243 (RKDD…KKEE), 266–284 (RDLK…KMFE), and 314–328 (DQAK…TEEL). Residues 262 to 356 (LQSARDLKEE…AQLEEMARVA (95 aa)) adopt a coiled-coil conformation.

The protein belongs to the CWC26 family.

This Caenorhabditis elegans protein is BUD13 homolog.